We begin with the raw amino-acid sequence, 81 residues long: Large ribosomal subunit protein bL31B (81 aa).

This sequence belongs to the bacterial ribosomal protein bL31 family. Type B subfamily. As to quaternary structure, part of the 50S ribosomal subunit.

The protein is Large ribosomal subunit protein bL31B of Bacillus cereus (strain G9842).